A 1383-amino-acid chain; its full sequence is DNA-directed RNA polymerase subunit beta (1383 aa).

This sequence belongs to the RNA polymerase beta chain family. The RNAP catalytic core consists of 2 alpha, 1 beta, 1 beta' and 1 omega subunit. When a sigma factor is associated with the core the holoenzyme is formed, which can initiate transcription.

The catalysed reaction is RNA(n) + a ribonucleoside 5'-triphosphate = RNA(n+1) + diphosphate. In terms of biological role, DNA-dependent RNA polymerase catalyzes the transcription of DNA into RNA using the four ribonucleoside triphosphates as substrates. This is DNA-directed RNA polymerase subunit beta from Xanthomonas axonopodis pv. citri (strain 306).